A 211-amino-acid polypeptide reads, in one-letter code: Sec-independent protein translocase protein TatB (211 aa).

Residues 1–21 (MFDIGVGELTLIAVVALVVLG) form a helical membrane-spanning segment. The interval 175-211 (AHLTSAPAPPVTVAPVDAGTSASPTPSEPTKIQEKQP) is disordered. Residues 194 to 204 (TSASPTPSEPT) are compositionally biased toward polar residues.

Belongs to the TatB family. The Tat system comprises two distinct complexes: a TatABC complex, containing multiple copies of TatA, TatB and TatC subunits, and a separate TatA complex, containing only TatA subunits. Substrates initially bind to the TatABC complex, which probably triggers association of the separate TatA complex to form the active translocon.

Its subcellular location is the cell inner membrane. Functionally, part of the twin-arginine translocation (Tat) system that transports large folded proteins containing a characteristic twin-arginine motif in their signal peptide across membranes. Together with TatC, TatB is part of a receptor directly interacting with Tat signal peptides. TatB may form an oligomeric binding site that transiently accommodates folded Tat precursor proteins before their translocation. The chain is Sec-independent protein translocase protein TatB from Xanthomonas oryzae pv. oryzae (strain MAFF 311018).